Reading from the N-terminus, the 1129-residue chain is Phospholipid-transporting ATPase 11C (1129 aa).

The Cytoplasmic segment spans residues 1 to 83 (MFRRTLNRLC…IIFLVQVTVD (83 aa)). The helical transmembrane segment at 84–104 (TPTSPVTSGLPLFFVITVTAI) threads the bilayer. Topologically, residues 105 to 287 (KQGYEDWLRH…SQKCSAVEKS (183 aa)) are extracellular. Residues 288 to 308 (INAFLIVYLFILLTKAAVCTT) traverse the membrane as a helical segment. The Cytoplasmic portion of the chain corresponds to 309-343 (LKYVWQSSPYNDEPWYNQKTQKERETFQVLKMFTD). A helical transmembrane segment spans residues 344–364 (FLSFMVLFNFIIPVSMYVTVE). Residues 365–876 (MQKFLGSFFI…YVRIAHLVQY (512 aa)) lie on the Extracellular side of the membrane. The active-site 4-aspartylphosphate intermediate is aspartate 409. Positions 409, 410, and 411 each coordinate ATP. Aspartate 409 serves as a coordination point for Mg(2+). Threonine 411 is a Mg(2+) binding site. Phosphoserine is present on serine 442. ATP contacts are provided by glutamate 498, phenylalanine 540, lysine 563, and arginine 594. A coiled-coil region spans residues 607 to 643 (DFERINAQLVEAKMALQDREEKLEKVFDEIETNMNLI). Residues threonine 674, glycine 675, and aspartate 676 each coordinate ATP. Positions 695–726 (TELLELTTKTIEESERKEDRLHELLIEYRKKL) form a coiled coil. ATP-binding residues include arginine 789 and lysine 795. Aspartate 816 provides a ligand contact to Mg(2+). ATP is bound by residues asparagine 819 and aspartate 820. Aspartate 820 serves as a coordination point for Mg(2+). The helical transmembrane segment at 877–897 (FFYKNLCFILPQFLYQFFCGF) threads the bilayer. Topologically, residues 898–905 (SQQPLYDA) are cytoplasmic. Residues 906 to 926 (AYLTMYNICFTSLPILAYSLL) traverse the membrane as a helical segment. The Extracellular portion of the chain corresponds to 927–952 (EQHINIDTLTADPRLYMKITGNAMLQ). A helical transmembrane segment spans residues 953-973 (LGPFLHWTFLAAFEGTVFFFG). The Cytoplasmic segment spans residues 974 to 988 (TYFLFQTSSLEDNGK). A helical transmembrane segment spans residues 989 to 1009 (IYGNWTFGTIVFTVLVFTVTL). Over 1010 to 1023 (KLALDTRFWTWINH) the chain is Extracellular. A helical membrane pass occupies residues 1024–1044 (FVIWGSLAFYVFFSFFWGGII). Residues 1045–1066 (WPFLKQQRMYFVFAQMLCSVST) lie on the Cytoplasmic side of the membrane. A helical membrane pass occupies residues 1067 to 1087 (WLAIILLIFISLFPEILLIVV). The Extracellular portion of the chain corresponds to 1088 to 1129 (KNVRRRSARRNLSCRRASDSLSARPSVRPLLLRTFSDESNIL). 3 positions are modified to phosphoserine: serine 1105, serine 1113, and serine 1123. Residues 1113-1118 (SVRPLL) carry the Di-leucine motif motif.

This sequence belongs to the cation transport ATPase (P-type) (TC 3.A.3) family. Type IV subfamily. In terms of assembly, component of a P4-ATPase flippase complex which consists of a catalytic alpha subunit ATP11C and an accessory beta subunit TMEM30A. Requires Mg(2+) as cofactor. In terms of processing, proteolytically cleaved by CASP3, CASP6 and CASP7. Post-translationally, phosphorylated at Ser-1113 likely by PRKCA; this creates a functional di-leucine motif that is sufficient for endocytosis. Widely expressed. Expressed in retina, brain, liver and testes (at protein level). Expressed in lung, bone marrow, lymph nodes, prostate, ovary and uterus. Expressed in fetus.

Its subcellular location is the cell membrane. The protein localises to the endoplasmic reticulum membrane. It is found in the early endosome membrane. It localises to the recycling endosome membrane. The catalysed reaction is ATP + H2O + phospholipidSide 1 = ADP + phosphate + phospholipidSide 2.. It carries out the reaction a 1,2-diacyl-sn-glycero-3-phospho-L-serine(out) + ATP + H2O = a 1,2-diacyl-sn-glycero-3-phospho-L-serine(in) + ADP + phosphate + H(+). The enzyme catalyses a 1,2-diacyl-sn-glycero-3-phosphoethanolamine(out) + ATP + H2O = a 1,2-diacyl-sn-glycero-3-phosphoethanolamine(in) + ADP + phosphate + H(+). Its function is as follows. Catalytic component of a P4-ATPase flippase complex which catalyzes the hydrolysis of ATP coupled to the transport of aminophospholipids, phosphatidylserines (PS) and phosphatidylethanolamines (PE), from the outer to the inner leaflet of the plasma membrane. Major PS-flippase in immune cell subsets. In erythrocyte plasma membrane, it is required to maintain PS in the inner leaflet preventing its exposure on the surface. This asymmetric distribution is critical for the survival of erythrocytes in circulation since externalized PS is a phagocytic signal for erythrocyte clearance by splenic macrophages. Required for B cell differentiation past the pro-B cell stage. Seems to mediate PS flipping in pro-B cells. May be involved in the transport of cholestatic bile acids. The polypeptide is Phospholipid-transporting ATPase 11C (Mus musculus (Mouse)).